Consider the following 329-residue polypeptide: COP9 signalosome complex subunit 6 (329 aa).

Residues 44-175 (TRVKAQAACS…VTIYESELHV (132 aa)) form the MPN domain.

This sequence belongs to the peptidase M67A family. CSN6 subfamily. In terms of assembly, component of the CSN complex, probably composed of CSN1, CSN2, CSN3, CSN4, CSN5, CSN6, CSN7 and CSN8.

Its function is as follows. Component of the COP9 signalosome complex (CSN), a complex involved in various cellular and developmental processes such as photomorphogenesis and response to hormones. The CSN complex is an essential regulator of the ubiquitin (Ubl) conjugation pathway by mediating the deneddylation of the cullin subunits of SCF-type E3 ligase complexes, leading to decrease the Ubl ligase activity of SCF. Involved in early response to iron deficiency. The protein is COP9 signalosome complex subunit 6 of Oryza sativa subsp. japonica (Rice).